The following is a 2890-amino-acid chain: Bifunctional DNA-directed RNA polymerase subunit beta-beta' (2890 aa).

The tract at residues 1–1377 is DNA-directed RNA polymerase subunit beta; it reads MSKKIPLKNR…DINIFGDDVD (1377 aa). Positions 1384-2890 are DNA-directed RNA polymerase subunit beta'; the sequence is PIVIKEDDRP…LRTLEDGPKF (1507 aa). The Zn(2+) site is built by Cys-1449, Cys-1451, Cys-1465, and Cys-1468. Mg(2+) is bound by residues Asp-1849, Asp-1851, and Asp-1853. Zn(2+) contacts are provided by Cys-2179, Cys-2253, Cys-2260, and Cys-2263.

This sequence in the N-terminal section; belongs to the RNA polymerase beta chain family. In the C-terminal section; belongs to the RNA polymerase beta' chain family. In terms of assembly, the RNAP catalytic core consists of 2 alpha, 1 beta/beta' and 1 omega subunit. When a sigma factor is associated with the core the holoenzyme is formed, which can initiate transcription. Mg(2+) is required as a cofactor. The cofactor is Zn(2+).

The enzyme catalyses RNA(n) + a ribonucleoside 5'-triphosphate = RNA(n+1) + diphosphate. Functionally, DNA-dependent RNA polymerase catalyzes the transcription of DNA into RNA using the four ribonucleoside triphosphates as substrates. In Helicobacter pylori (strain HPAG1), this protein is Bifunctional DNA-directed RNA polymerase subunit beta-beta' (rpoBC).